The chain runs to 1187 residues: DNA-directed RNA polymerase subunit beta (1187 aa).

The protein belongs to the RNA polymerase beta chain family. In terms of assembly, the RNAP catalytic core consists of 2 alpha, 1 beta, 1 beta' and 1 omega subunit. When a sigma factor is associated with the core the holoenzyme is formed, which can initiate transcription.

The enzyme catalyses RNA(n) + a ribonucleoside 5'-triphosphate = RNA(n+1) + diphosphate. Its function is as follows. DNA-dependent RNA polymerase catalyzes the transcription of DNA into RNA using the four ribonucleoside triphosphates as substrates. The sequence is that of DNA-directed RNA polymerase subunit beta from Streptococcus mutans serotype c (strain ATCC 700610 / UA159).